The following is a 239-amino-acid chain: Lysophospholipase-like protein 1 (239 aa).

An N-acetylalanine modification is found at Ala-2. Catalysis depends on charge relay system residues Ser-125, Asp-180, and His-212.

The protein belongs to the AB hydrolase superfamily. AB hydrolase 2 family.

Its subcellular location is the cytoplasm. The protein localises to the cytosol. The catalysed reaction is S-hexadecanoyl-L-cysteinyl-[protein] + H2O = L-cysteinyl-[protein] + hexadecanoate + H(+). Palmitoyl thioesterase that catalyzes depalmitoylation of CGAS and KCNMA1. Acts as a regulator of innate immunity by mediating depalmitoylation of CGAS, thereby preventing CGAS homodimerization and cyclic GMP-AMP synthase activity. Does not exhibit phospholipase nor triacylglycerol lipase activity, able to hydrolyze only short chain substrates due to its shallow active site. The chain is Lysophospholipase-like protein 1 from Mus musculus (Mouse).